The chain runs to 556 residues: Membrane protein insertase YidC (556 aa).

The next 5 membrane-spanning stretches (helical) occupy residues 6 to 26, 332 to 352, 358 to 378, 428 to 448, and 501 to 521; these read IVLYMALALIGLSLWNAWQID, LDLTVDYGILWFLSSLLFSLM, VVGNWGWSIVLVTVLIKLAFY, LGGCLPILIQIPVFIALYWVL, and VMMFLPILFTGLFWNFPSGLV.

This sequence belongs to the OXA1/ALB3/YidC family. Type 1 subfamily. Interacts with the Sec translocase complex via SecD. Specifically interacts with transmembrane segments of nascent integral membrane proteins during membrane integration.

It localises to the cell inner membrane. Required for the insertion and/or proper folding and/or complex formation of integral membrane proteins into the membrane. Involved in integration of membrane proteins that insert both dependently and independently of the Sec translocase complex, as well as at least some lipoproteins. Aids folding of multispanning membrane proteins. This Legionella pneumophila (strain Paris) protein is Membrane protein insertase YidC.